The chain runs to 435 residues: ATP-dependent RNA helicase SUB2 (435 aa).

Positions 1–40 are disordered; that stretch reads MSHEGQEELLDYSDSEEIAVPTTTAPSAAAGEGANDKEAD. The segment covering 7 to 17 has biased composition (acidic residues); sequence EELLDYSDSEE. Residues 19–33 show a composition bias toward low complexity; sequence AVPTTTAPSAAAGEG. The Q motif signature appears at 51–79; that stretch reads TGFRDFLLKPELLRAIGDCGFEHPSEVQQ. The Helicase ATP-binding domain occupies 82-257; it reads IPQSILGTDV…KKFMQNPLEI (176 aa). 95–102 is an ATP binding site; it reads AKSGLGKT. A DECD box motif is present at residues 204–207; it reads DECD. Residues 269-430 form the Helicase C-terminal domain; the sequence is GLQQYYIKLD…EFPEEGVDPS (162 aa).

It belongs to the DEAD box helicase family. DECD subfamily.

The protein resides in the nucleus. The catalysed reaction is ATP + H2O = ADP + phosphate + H(+). Its function is as follows. ATP-binding RNA helicase involved in transcription elongation and required for the export of mRNA out of the nucleus. SUB2 also plays a role in pre-mRNA splicing and spliceosome assembly. May be involved in rDNA and telomeric silencing, and maintenance of genome integrity. The sequence is that of ATP-dependent RNA helicase SUB2 (SUB2) from Debaryomyces hansenii (strain ATCC 36239 / CBS 767 / BCRC 21394 / JCM 1990 / NBRC 0083 / IGC 2968) (Yeast).